The sequence spans 352 residues: Aspartic protease Bla g 2 (352 aa).

The first 19 residues, 1-19 (MIGLKLVTVLFAVATITHA), serve as a signal peptide directing secretion. Residues 20 to 24 (AELQR) constitute a propeptide, removed in mature form. Residues 39–346 (YAGITKIGNQ…NWENKTMGFG (308 aa)) enclose the Peptidase A1 domain. D55 is an active-site residue. 3 cysteine pairs are disulfide-bonded: C59–C151, C68–C73, and C75–C136. N-linked (GlcNAc...) asparagine glycosylation is present at N117. Residues H178 and H186 each coordinate Zn(2+). Residue D239 is part of the active site. 2 disulfide bridges follow: C261–C272 and C276–C309. N-linked (GlcNAc...) asparagine glycosylation is present at N295. D326 and D330 together coordinate Zn(2+). N-linked (GlcNAc...) asparagine glycosylation occurs at N340.

It belongs to the peptidase A1 family. Homodimer.

Functionally, functions as a digestive enzyme in the cockroach. This Blattella germanica (German cockroach) protein is Aspartic protease Bla g 2.